A 205-amino-acid chain; its full sequence is Outer-membrane lipoprotein LolB (205 aa).

Residues 1–17 form the signal peptide; the sequence is MFLRHVIVFSLIALLTG. Cysteine 18 carries the N-palmitoyl cysteine lipid modification. Residue cysteine 18 is the site of S-diacylglycerol cysteine attachment.

The protein belongs to the LolB family. In terms of assembly, monomer.

It localises to the cell outer membrane. In terms of biological role, plays a critical role in the incorporation of lipoproteins in the outer membrane after they are released by the LolA protein. This Pseudomonas savastanoi pv. phaseolicola (strain 1448A / Race 6) (Pseudomonas syringae pv. phaseolicola (strain 1448A / Race 6)) protein is Outer-membrane lipoprotein LolB.